The chain runs to 121 residues: Protein GAT4 (121 aa).

The tract at residues 29–48 is disordered; sequence EAQHGLPRNADSQPARPRTG. The GATA-type zinc-finger motif lies at 53-79; that stretch reads CGQCGEIKTSLQWREGPNGAACLCNAC.

The protein is Protein GAT4 (GAT4) of Saccharomyces cerevisiae (strain ATCC 204508 / S288c) (Baker's yeast).